Here is a 344-residue protein sequence, read N- to C-terminus: Beta-1,4-galactosyltransferase 4 (344 aa).

Residues 1 to 12 (MGFNLTFHLSYK) lie on the Cytoplasmic side of the membrane. Residues 13-38 (FRLLLLLTLCLTVVGWATSNYFVGAI) form a helical; Signal-anchor for type II membrane protein membrane-spanning segment. At 39–344 (QEIPKAKEFM…NITVDFWFGA (306 aa)) the chain is on the lumenal side. C77 and C118 form a disulfide bridge. UDP-alpha-D-galactose is bound by residues 129–133 (PHRNR), 168–170 (FNR), and 195–196 (VD). C189 and C208 are disulfide-bonded. A Mn(2+)-binding site is contributed by D196. N-linked (GlcNAc...) asparagine glycosylation occurs at N220. Residues Y224 and W256 each contribute to the UDP-alpha-D-galactose site. 258–261 (GEDD) serves as a coordination point for N-acetyl-D-glucosamine. Residue H289 coordinates Mn(2+). UDP-alpha-D-galactose is bound at residue 289-291 (HTR). R301 contacts N-acetyl-D-glucosamine. N335 is a glycosylation site (N-linked (GlcNAc...) asparagine).

Belongs to the glycosyltransferase 7 family. As to quaternary structure, interacts with SLC35A2 (isoform 2; UGT1). It depends on Mn(2+) as a cofactor. In terms of processing, N-glycosylated. Highest expression is observed in placenta, pancreas, kidney and heart. Expressed in corneal epithelial cells.

It localises to the golgi apparatus membrane. The protein localises to the secreted. The enzyme catalyses N-acetyl-D-glucosamine + UDP-alpha-D-galactose = beta-D-galactosyl-(1-&gt;4)-N-acetyl-D-glucosamine + UDP + H(+). It carries out the reaction a beta-D-GlcNAc-(1-&gt;3)-beta-D-Gal-(1-&gt;4)-beta-D-Glc-(1&lt;-&gt;1)-Cer(d18:1(4E)) + UDP-alpha-D-galactose = a neolactoside nLc4Cer(d18:1(4E)) + UDP + H(+). The catalysed reaction is 3-O-{beta-D-galactosyl-(1-&gt;3)-[6-O-sulfo-N-acetyl-beta-D-glucosaminyl-(1-&gt;6)]-N-acetyl-alpha-D-galactosaminyl}-L-seryl-[protein] + UDP-alpha-D-galactose = 3-O-{beta-D-galactosyl-(1-&gt;3)-[beta-D-galactosyl-(1-&gt;4)-6-O-sulfo-N-acetyl-beta-D-glucosaminyl-(1-&gt;6)]-N-acetyl-alpha-D-galactosaminyl}-L-seryl-[protein] + UDP + H(+). It catalyses the reaction 3-O-{beta-D-galactosyl-(1-&gt;3)-[6-O-sulfo-N-acetyl-beta-D-glucosaminyl-(1-&gt;6)]-N-acetyl-alpha-D-galactosaminyl}-L-threonyl-[protein] + UDP-alpha-D-galactose = 3-O-{beta-D-galactosyl-(1-&gt;3)-[beta-D-galactosyl-(1-&gt;4)-6-O-sulfo-N-acetyl-beta-D-glucosaminyl-(1-&gt;6)]-N-acetyl-alpha-D-galactosaminyl}-L-threonyl-[protein] + UDP + H(+). It functions in the pathway protein modification; protein glycosylation. The protein operates within glycolipid biosynthesis. With respect to regulation, up-regulated by LALBA. Functionally, galactose (Gal) transferase involved in the synthesis of terminal N-acetyllactosamine (LacNac) unit present on glycan chains of glycoproteins and glycosphingolipids. Catalyzes the transfer of Gal residue via a beta1-&gt;4 linkage from UDP-Gal to the non-reducing terminal N-acetyl glucosamine 6-O-sulfate (6-O-sulfoGlcNAc) in the linearly growing chain of both N- and O-linked keratan sulfate proteoglycans. Cooperates with B3GNT7 N-acetyl glucosamine transferase and CHST6 and CHST1 sulfotransferases to construct and elongate mono- and disulfated disaccharide units [-&gt;3Galbeta1-&gt;4(6-sulfoGlcNAcbeta)1-&gt;] and [-&gt;3(6-sulfoGalbeta)1-&gt;4(6-sulfoGlcNAcbeta)1-&gt;] within keratan sulfate polymer. Transfers Gal residue via a beta1-&gt;4 linkage to terminal 6-O-sulfoGlcNAc within the LacNac unit of core 2 O-glycans forming 6-sulfo-sialyl-Lewis X (sLex). May contribute to the generation of sLex epitope on mucin-type glycoproteins that serve as ligands for SELL/L-selectin, a major regulator of leukocyte migration. In the biosynthesis pathway of neolacto-series glycosphingolipids, transfers Gal residue via a beta1-&gt;4 linkage to terminal GlcNAc of a lactotriaosylceramide (Lc3Cer) acceptor to form a neolactotetraosylceramide. The chain is Beta-1,4-galactosyltransferase 4 from Homo sapiens (Human).